Here is a 705-residue protein sequence, read N- to C-terminus: Elongation factor G (705 aa).

Positions aspartate 8–leucine 294 constitute a tr-type G domain. GTP is bound by residues alanine 17–threonine 24, aspartate 92–histidine 96, and asparagine 146–aspartate 149.

Belongs to the TRAFAC class translation factor GTPase superfamily. Classic translation factor GTPase family. EF-G/EF-2 subfamily.

It localises to the cytoplasm. Functionally, catalyzes the GTP-dependent ribosomal translocation step during translation elongation. During this step, the ribosome changes from the pre-translocational (PRE) to the post-translocational (POST) state as the newly formed A-site-bound peptidyl-tRNA and P-site-bound deacylated tRNA move to the P and E sites, respectively. Catalyzes the coordinated movement of the two tRNA molecules, the mRNA and conformational changes in the ribosome. The sequence is that of Elongation factor G from Dinoroseobacter shibae (strain DSM 16493 / NCIMB 14021 / DFL 12).